Consider the following 1006-residue polypeptide: MSNSRNNRVMVEGVGARVVRGPDWKWGKQDGGEGHVGTVRSFESPEEVVVVWDNGTAANYRCSGAYDLRILDSAPTGIKHDGTMCDTCRQQPIIGIRWKCAECTNYDLCTVCYHGDKHHLRHRFYRITTPGSERVLLESRRKSKKITARGIFAGARVVRGVDWQWEDQDGGNGRRGKVTEIQDWSASSPHSAAYVLWDNGAKNLYRVGFEGMSDLKCVQDAKGGSFYRDHCPVLGEQNGNRNPGGLQIGDLVNIDLDLEIVQSLQHGHGGWTDGMFETLTTTGTVCGIDEDHDIVVQYPSGNRWTFNPAVLTKANIVRSGDAAQGAEGGTSQFQVGDLVQVCYDLERIKLLQRGHGEWAEAMLPTLGKVGRVQQIYSDSDLKVEVCGTSWTYNPAAVSKVASAGSAISNASGERLSQLLKKLFETQESGDLNEELVKAAANGDVAKVEDLLKRPDVDVNGQCAGHTAMQAASQNGHVDILKLLLKQNVDVEAEDKDGDRAVHHAAFGDEGAVIEVLHRGSADLNARNKRRQTPLHIAVNKGHLQVVKTLLDFGCHPSLQDSEGDTPLHDAISKKRDDILAVLLEAGADVTITNNNGFNALHHAALRGNPSAMRVLLSKLPRPWIVDEKKDDGYTALHLAALNNHVEVAELLVHQGNANLDIQNVNQQTALHLAVERQHTQIVRLLVRAGAKLDIQDKDGDTPLHEALRHHTLSQLRQLQDMQDVGKVDAAWEPSKNTLIMGLGTQGAEKKSAASIACFLAANGADLSIRNKKGQSPLDLCPDPNLCKALAKCHKEKVSGQVGSRSPSMISNDSETLEECMVCSDMKRDTLFGPCGHIATCSLCSPRVKKCLICKEQVQSRTKIEECVVCSDKKAAVLFQPCGHMCACENCANLMKKCVQCRAVVERRVPFIMCCGGKSSEDATDDISSGNIPVLQKDKDNTNVNADVQKLQQQLQDIKEQTMCPVCLDRLKNMIFLCGHGTCQLCGDRMSECPICRKAIERRILLY.

The MIB/HERC2 1 domain occupies 6–74 (NNRVMVEGVG…AYDLRILDSA (69 aa)). The segment at 80-132 (HDGTMCDTCRQQPIIGIRWKCAECTNYDLCTVCYHGDKHHLRHRFYRITTPGS) adopts a ZZ-type zinc-finger fold. 8 residues coordinate Zn(2+): C85, C88, C100, C103, C109, C112, H118, and H122. The region spanning 143-221 (SKKITARGIF…MSDLKCVQDA (79 aa)) is the MIB/HERC2 2 domain. S408 bears the Phosphoserine mark. ANK repeat units follow at residues 430–460 (DLNEELVKAAANGDVAKVEDLLKRPDVDVNG), 463–492 (AGHTAMQAASQNGHVDILKLLLKQNVDVEA), 496–525 (DGDRAVHHAAFGDEGAVIEVLHRGSADLNA), 529–558 (RRQTPLHIAVNKGHLQVVKTLLDFGCHPSL), 562–591 (EGDTPLHDAISKKRDDILAVLLEAGADVTI), 595–627 (NGFNALHHAALRGNPSAMRVLLSKLPRPWIVDE), 631–661 (DGYTALHLAALNNHVEVAELLVHQGNANLDI), 665–694 (NQQTALHLAVERQHTQIVRLLVRAGAKLDI), and 698–729 (DGDTPLHEALRHHTLSQLRQLQDMQDVGKVDA). 2 consecutive RING-type zinc fingers follow at residues 819-854 (CMVCSDMKRDTLFGPCGHIATCSLCSPRVKKCLICK) and 866-901 (CVVCSDKKAAVLFQPCGHMCACENCANLMKKCVQCR). A coiled-coil region spans residues 935 to 962 (QKDKDNTNVNADVQKLQQQLQDIKEQTM). An RING-type 3 zinc finger spans residues 963–996 (CPVCLDRLKNMIFLCGHGTCQLCGDRMSECPICR).

In terms of assembly, interacts with CEP131 and PCM1. In terms of processing, ubiquitinated; possibly via autoubiquitination. Ubiquitinated; this modification is inhibited in response to cellular stress, such as ultraviolet light (UV) radiation or heat shock. As to expression, widely expressed at low level. Expressed at higher level in spinal cord, ovary, whole brain, and all specific brain regions examined.

The protein localises to the cytoplasm. It is found in the cytoskeleton. Its subcellular location is the microtubule organizing center. It localises to the centrosome. The protein resides in the centriolar satellite. The protein localises to the cell membrane. The enzyme catalyses S-ubiquitinyl-[E2 ubiquitin-conjugating enzyme]-L-cysteine + [acceptor protein]-L-lysine = [E2 ubiquitin-conjugating enzyme]-L-cysteine + N(6)-ubiquitinyl-[acceptor protein]-L-lysine.. Its pathway is protein modification; protein ubiquitination. Its function is as follows. E3 ubiquitin-protein ligase that mediates ubiquitination of Delta receptors, which act as ligands of Notch proteins. Positively regulates the Delta-mediated Notch signaling by ubiquitinating the intracellular domain of Delta, leading to endocytosis of Delta receptors. Probably mediates ubiquitination and subsequent proteasomal degradation of DAPK1, thereby antagonizing anti-apoptotic effects of DAPK1 to promote TNF-induced apoptosis. Involved in ubiquitination of centriolar satellite CEP131, CEP290 and PCM1 proteins and hence inhibits primary cilium formation in proliferating cells. Mediates 'Lys-63'-linked polyubiquitination of TBK1, which probably participates in kinase activation. In terms of biological role, (Microbial infection) During adenovirus infection, mediates ubiquitination of Core-capsid bridging protein. This allows viral genome delivery into nucleus for infection. The protein is E3 ubiquitin-protein ligase MIB1 (MIB1) of Homo sapiens (Human).